Consider the following 90-residue polypeptide: Small ribosomal subunit protein bS20 (90 aa).

Residues 1-25 (MANSPSAKKRAKQAEKRRSHNASLR) are disordered. Basic residues predominate over residues 7 to 20 (AKKRAKQAEKRRSH).

It belongs to the bacterial ribosomal protein bS20 family.

In terms of biological role, binds directly to 16S ribosomal RNA. The chain is Small ribosomal subunit protein bS20 from Pseudomonas fluorescens (strain Pf0-1).